We begin with the raw amino-acid sequence, 333 residues long: T-cell surface glycoprotein CD1b-2 (333 aa).

Positions 1-20 (MLLLPLLLLGVILPGGDNED) are cleaved as a signal peptide. At 21-302 (VFQGPTSFHL…LYWGHPTSIG (282 aa)) the chain is on the extracellular side. Asn-38, Asn-75, and Asn-146 each carry an N-linked (GlcNAc...) asparagine glycan. Cystine bridges form between Cys-120/Cys-184, Cys-149/Cys-163, and Cys-224/Cys-279. The Ig-like domain maps to 185 to 295 (PRYLLGVLDA…LGDQDIILYW (111 aa)). The helical transmembrane segment at 303 to 323 (LILVAIIVPSLILSICLALWF) threads the bilayer. Topologically, residues 324–333 (WRRWSYQNIL) are cytoplasmic. The Internalization signal signature appears at 329–332 (YQNI).

As to quaternary structure, heterodimer with B2M (beta-2-microglobulin). Interacts with saposin C.

Its subcellular location is the cell membrane. It localises to the endosome membrane. The protein resides in the lysosome membrane. Its function is as follows. Antigen-presenting protein that binds self and non-self lipid and glycolipid antigens and presents them to T-cell receptors on natural killer T-cells. The chain is T-cell surface glycoprotein CD1b-2 from Ovis aries (Sheep).